The primary structure comprises 218 residues: Small ribosomal subunit protein uS3c (218 aa).

The region spanning 47 to 118 is the KH type-2 domain; the sequence is VQKNIRISSG…KLNIAITRIS (72 aa).

The protein belongs to the universal ribosomal protein uS3 family. Part of the 30S ribosomal subunit.

Its subcellular location is the plastid. The protein resides in the chloroplast. The chain is Small ribosomal subunit protein uS3c (rps3) from Arabis hirsuta (Hairy rock-cress).